We begin with the raw amino-acid sequence, 505 residues long: Apolipoprotein N-acyltransferase (505 aa).

Transmembrane regions (helical) follow at residues 26–46 (FAPYQLWPIAILSPAILLILL), 66–86 (FATGVSWVYVSISGFGGMPLI), 89–109 (LFLMGMLIAYLAVYSGLFAWL), 129–149 (LWLITDWLRGWVMTGFPWLWL), 161–181 (FAPIGGVELLTLFVLISAGAL), and 186–206 (IHKQWLMIIIPVVLMSAGFGI). The CN hydrolase domain maps to 225–471 (IQGNVDQNLK…TAVLRAELTP (247 aa)). E264 functions as the Proton acceptor in the catalytic mechanism. K330 is an active-site residue. Residue C382 is the Nucleophile of the active site. Residues 481-501 (FGTWPLYFWVALSLMLAWWLP) traverse the membrane as a helical segment.

This sequence belongs to the CN hydrolase family. Apolipoprotein N-acyltransferase subfamily.

Its subcellular location is the cell inner membrane. The enzyme catalyses N-terminal S-1,2-diacyl-sn-glyceryl-L-cysteinyl-[lipoprotein] + a glycerophospholipid = N-acyl-S-1,2-diacyl-sn-glyceryl-L-cysteinyl-[lipoprotein] + a 2-acyl-sn-glycero-3-phospholipid + H(+). It participates in protein modification; lipoprotein biosynthesis (N-acyl transfer). Functionally, catalyzes the phospholipid dependent N-acylation of the N-terminal cysteine of apolipoprotein, the last step in lipoprotein maturation. This is Apolipoprotein N-acyltransferase from Vibrio parahaemolyticus serotype O3:K6 (strain RIMD 2210633).